We begin with the raw amino-acid sequence, 350 residues long: Nuclear pore complex-interacting protein family member A1 (350 aa).

Residues 306-325 (KTPPECLLTPLPPSAPPSVD) are disordered.

It belongs to the NPIP family. In terms of assembly, may associate with the nuclear pore complex. Widely expressed.

Its subcellular location is the nucleus. The protein resides in the nuclear pore complex. It is found in the nucleus membrane. The polypeptide is Nuclear pore complex-interacting protein family member A1 (NPIPA1) (Homo sapiens (Human)).